A 523-amino-acid polypeptide reads, in one-letter code: GMP synthase [glutamine-hydrolyzing] (523 aa).

The Glutamine amidotransferase type-1 domain maps to Lys8–Lys205. Cys85 serves as the catalytic Nucleophile. Active-site residues include His179 and Glu181. The 193-residue stretch at Trp206–Arg398 folds into the GMPS ATP-PPase domain. Position 233-239 (Ser233–Ser239) interacts with ATP.

In terms of assembly, homodimer.

It catalyses the reaction XMP + L-glutamine + ATP + H2O = GMP + L-glutamate + AMP + diphosphate + 2 H(+). It functions in the pathway purine metabolism; GMP biosynthesis; GMP from XMP (L-Gln route): step 1/1. Its function is as follows. Catalyzes the synthesis of GMP from XMP. The sequence is that of GMP synthase [glutamine-hydrolyzing] from Actinobacillus pleuropneumoniae serotype 3 (strain JL03).